Here is a 271-residue protein sequence, read N- to C-terminus: Phosphate import ATP-binding protein PstB (271 aa).

One can recognise an ABC transporter domain in the interval 25-266 (FDTKNLNLWY…PSDKRTEDYI (242 aa)). Residue 57-64 (GPSGCGKS) coordinates ATP.

Belongs to the ABC transporter superfamily. Phosphate importer (TC 3.A.1.7) family. As to quaternary structure, the complex is composed of two ATP-binding proteins (PstB), two transmembrane proteins (PstC and PstA) and a solute-binding protein (PstS).

The protein resides in the cell membrane. The enzyme catalyses phosphate(out) + ATP + H2O = ADP + 2 phosphate(in) + H(+). Functionally, part of the ABC transporter complex PstSACB involved in phosphate import. Responsible for energy coupling to the transport system. The sequence is that of Phosphate import ATP-binding protein PstB from Bacillus cereus (strain ATCC 14579 / DSM 31 / CCUG 7414 / JCM 2152 / NBRC 15305 / NCIMB 9373 / NCTC 2599 / NRRL B-3711).